The sequence spans 178 residues: Ribosome maturation factor RimP (178 aa).

It belongs to the RimP family.

It localises to the cytoplasm. In terms of biological role, required for maturation of 30S ribosomal subunits. This Cutibacterium acnes (strain DSM 16379 / KPA171202) (Propionibacterium acnes) protein is Ribosome maturation factor RimP.